The following is an 80-amino-acid chain: Serine palmitoyltransferase small subunit B (80 aa).

Residues Met-1–Ser-11 are Cytoplasmic-facing. A helical transmembrane segment spans residues Trp-12–Trp-29. The Lumenal segment spans residues Glu-30 to Thr-36. Residues Val-37–Val-57 form a helical membrane-spanning segment. Over Arg-58–Thr-80 the chain is Cytoplasmic.

This sequence belongs to the SPTSS family. SPTSSB subfamily. As to quaternary structure, component of the serine palmitoyltransferase (SPT) complex, which is composed of SPTLC1, SPTLC2 or SPTLC3 and SPTSSA or SPTSSB. The heterodimer consisting of SPTLC1 and SPTLC2/SPTLC3 forms the catalytic core of the enzyme, while SPTSSA or SPTSSB subunits determine substrate specificity. SPT also interacts with ORMDL proteins, especially ORMDL3, which negatively regulate SPT activity in the presence of ceramides.

It is found in the endoplasmic reticulum membrane. Its pathway is lipid metabolism; sphingolipid metabolism. In terms of biological role, component of the serine palmitoyltransferase multisubunit enzyme (SPT) that catalyzes the initial and rate-limiting step in sphingolipid biosynthesis by condensing L-serine and activated acyl-CoA (most commonly palmitoyl-CoA) to form long-chain bases. The SPT complex is composed of SPTLC1, SPTLC2 or SPTLC3 and SPTSSA or SPTSSB. Within this complex, the heterodimer consisting of SPTLC1 and SPTLC2/SPTLC3 forms the catalytic core. Within the SPT complex, SPTSSB stimulates the catalytic activity and plays a role in substrate specificity. SPT complexes with this subunit showing a preference for longer acyl-CoAs. The SPTLC1-SPTLC2-SPTSSB complex shows a strong preference for C18-CoA substrate, while the SPTLC1-SPTLC3-SPTSSB isozyme displays an ability to use a broader range of acyl-CoAs, without apparent preference. This Danio rerio (Zebrafish) protein is Serine palmitoyltransferase small subunit B (sptssb).